The chain runs to 793 residues: Serine/threonine-protein phosphatase BSU1 (793 aa).

Kelch repeat units follow at residues 53–109 (STTA…LYGT), 110–160 (LILI…IAAQ), 214–262 (IFLL…VFGG), 264–314 (KLHV…NQYQ), and 329–388 (HLYV…EASS). Serine 395 and serine 444 each carry phosphoserine. Residues aspartate 510, histidine 512, aspartate 544, and asparagine 576 each coordinate Mn(2+). Residue histidine 577 is the Proton donor of the active site. Histidine 629 and histidine 707 together coordinate Mn(2+). Serine 764 carries the post-translational modification Phosphoserine.

Belongs to the PPP phosphatase family. BSU subfamily. Interacts with CDG1, CDL1 and ASK7/BIN2. The cofactor is Mn(2+). Phosphorylated at Ser-395 and Ser-444. Phosphorylated at Ser-764 by CDG1 and CDL1. As to expression, mainly expressed in young, elongating tissues. In young seedlings, it is expressed at the base of the hypocotyl, at the tip and most peripheral cell layers of cotyledons, and in the vascular cylinder of roots, particularly in the elongation zone and at the point of emergence of lateral roots. In mature plants, it is still present in the root vasculature, but almost completely absent in fully expanded stems and leaves. In flowers, it is mainly expressed in sepal veins, anther filaments, and in the style, suggesting that BSU1 is expressed in actively growing regions and apparently enriched in vascular tissues.

The protein resides in the nucleus. It catalyses the reaction O-phospho-L-seryl-[protein] + H2O = L-seryl-[protein] + phosphate. The catalysed reaction is O-phospho-L-threonyl-[protein] + H2O = L-threonyl-[protein] + phosphate. Its activity is regulated as follows. Activated by phosphorylation at Ser-764 by CDG1. Functionally, phosphatase that acts as a positive regulator of brassinosteroid (BR) signaling. Dephosphorylates BES1, a transcription factor that regulates the expression of BR-response genes, thereby playing an important role in the regulation of response to BRs. Inactivates the negative regulator of BR signaling ASK7/BIN2 by dephosphorylation at 'Tyr-200'. The chain is Serine/threonine-protein phosphatase BSU1 (BSU1) from Arabidopsis thaliana (Mouse-ear cress).